The primary structure comprises 839 residues: Translation initiation factor IF-2 (839 aa).

Basic and acidic residues-rich tracts occupy residues M1–K12 and A57–A67. 2 disordered regions span residues M1–K21 and A57–L244. Low complexity predominate over residues E68 to T90. Composition is skewed to basic and acidic residues over residues P104–T167, R185–R199, and G212–G233. Residues T338–T508 enclose the tr-type G domain. The segment at G347 to T354 is G1. G347–T354 is a GTP binding site. The interval G372 to H376 is G2. The segment at D394–G397 is G3. Residues D394 to H398 and N448 to D451 each bind GTP. The G4 stretch occupies residues N448 to D451. A G5 region spans residues S484 to K486.

This sequence belongs to the TRAFAC class translation factor GTPase superfamily. Classic translation factor GTPase family. IF-2 subfamily.

Its subcellular location is the cytoplasm. Functionally, one of the essential components for the initiation of protein synthesis. Protects formylmethionyl-tRNA from spontaneous hydrolysis and promotes its binding to the 30S ribosomal subunits. Also involved in the hydrolysis of GTP during the formation of the 70S ribosomal complex. The protein is Translation initiation factor IF-2 of Haemophilus ducreyi (strain 35000HP / ATCC 700724).